The sequence spans 190 residues: Elongation factor P-like protein (190 aa).

It belongs to the elongation factor P family.

The sequence is that of Elongation factor P-like protein from Shigella dysenteriae serotype 1 (strain Sd197).